A 135-amino-acid polypeptide reads, in one-letter code: RxLR effector protein Avh5 (135 aa).

The N-terminal stretch at 1–19 (MRLQFFLVMAVATLATISA) is a signal peptide. The RxLR-dEER signature appears at 43-71 (RFLRTADTDIVYEPKVHNPGKKQVFIEDK). A 1,2-diacyl-sn-glycero-3-phospho-(1D-myo-inositol-3-phosphate) is bound by residues lysine 81, lysine 83, and lysine 84.

It belongs to the RxLR effector family.

It localises to the secreted. The protein localises to the host cell. Effector that suppresses plant defense responses during the early stages of pathogen infection. Suppresses cell death induced by effectors and PAMPs in plant hosts. The protein is RxLR effector protein Avh5 of Phytophthora sojae (Soybean stem and root rot agent).